The sequence spans 641 residues: 1-deoxy-D-xylulose-5-phosphate synthase (641 aa).

Thiamine diphosphate is bound by residues H71 and 112–114 (SHA). Mg(2+) is bound at residue D144. Thiamine diphosphate contacts are provided by residues 145-146 (GA), N174, Y285, and E366. N174 is a binding site for Mg(2+).

The protein belongs to the transketolase family. DXPS subfamily. As to quaternary structure, homodimer. It depends on Mg(2+) as a cofactor. Thiamine diphosphate is required as a cofactor.

The catalysed reaction is D-glyceraldehyde 3-phosphate + pyruvate + H(+) = 1-deoxy-D-xylulose 5-phosphate + CO2. Its pathway is metabolic intermediate biosynthesis; 1-deoxy-D-xylulose 5-phosphate biosynthesis; 1-deoxy-D-xylulose 5-phosphate from D-glyceraldehyde 3-phosphate and pyruvate: step 1/1. Its function is as follows. Catalyzes the acyloin condensation reaction between C atoms 2 and 3 of pyruvate and glyceraldehyde 3-phosphate to yield 1-deoxy-D-xylulose-5-phosphate (DXP). In Mycobacteroides abscessus (strain ATCC 19977 / DSM 44196 / CCUG 20993 / CIP 104536 / JCM 13569 / NCTC 13031 / TMC 1543 / L948) (Mycobacterium abscessus), this protein is 1-deoxy-D-xylulose-5-phosphate synthase.